Reading from the N-terminus, the 294-residue chain is Phosphatidylserine decarboxylase proenzyme (294 aa).

Residues D100, H157, and S261 each act as charge relay system; for autoendoproteolytic cleavage activity in the active site. The active-site Schiff-base intermediate with substrate; via pyruvic acid; for decarboxylase activity is the S261. S261 carries the pyruvic acid (Ser); by autocatalysis modification.

This sequence belongs to the phosphatidylserine decarboxylase family. PSD-B subfamily. Prokaryotic type I sub-subfamily. Heterodimer of a large membrane-associated beta subunit and a small pyruvoyl-containing alpha subunit. It depends on pyruvate as a cofactor. Is synthesized initially as an inactive proenzyme. Formation of the active enzyme involves a self-maturation process in which the active site pyruvoyl group is generated from an internal serine residue via an autocatalytic post-translational modification. Two non-identical subunits are generated from the proenzyme in this reaction, and the pyruvate is formed at the N-terminus of the alpha chain, which is derived from the carboxyl end of the proenzyme. The autoendoproteolytic cleavage occurs by a canonical serine protease mechanism, in which the side chain hydroxyl group of the serine supplies its oxygen atom to form the C-terminus of the beta chain, while the remainder of the serine residue undergoes an oxidative deamination to produce ammonia and the pyruvoyl prosthetic group on the alpha chain. During this reaction, the Ser that is part of the protease active site of the proenzyme becomes the pyruvoyl prosthetic group, which constitutes an essential element of the active site of the mature decarboxylase.

Its subcellular location is the cell membrane. It catalyses the reaction a 1,2-diacyl-sn-glycero-3-phospho-L-serine + H(+) = a 1,2-diacyl-sn-glycero-3-phosphoethanolamine + CO2. It functions in the pathway phospholipid metabolism; phosphatidylethanolamine biosynthesis; phosphatidylethanolamine from CDP-diacylglycerol: step 2/2. Catalyzes the formation of phosphatidylethanolamine (PtdEtn) from phosphatidylserine (PtdSer). The polypeptide is Phosphatidylserine decarboxylase proenzyme (Histophilus somni (strain 2336) (Haemophilus somnus)).